Reading from the N-terminus, the 805-residue chain is Probable exo-1,4-beta-xylosidase xlnD (805 aa).

Positions M1–G17 are cleaved as a signal peptide. 5 N-linked (GlcNAc...) asparagine glycosylation sites follow: N20, N115, N140, N235, and N244. D308 is a catalytic residue. 12 N-linked (GlcNAc...) asparagine glycosylation sites follow: N350, N383, N405, N434, N445, N486, N490, N622, N653, N667, N689, and N711.

This sequence belongs to the glycosyl hydrolase 3 family.

It localises to the secreted. It catalyses the reaction Hydrolysis of (1-&gt;4)-beta-D-xylans, to remove successive D-xylose residues from the non-reducing termini.. The protein operates within glycan degradation; xylan degradation. Functionally, xylan 1,4-beta-xylosidase involved in the hydrolysis of xylan, a major structural heterogeneous polysaccharide found in plant biomass representing the second most abundant polysaccharide in the biosphere, after cellulose. The sequence is that of Probable exo-1,4-beta-xylosidase xlnD (xlnD) from Aspergillus aculeatus.